The sequence spans 233 residues: MSVHIEAKQGEIAETILLPGDPLRAKYIAETFLEDVVLFNQVRGMLGFTGTYKGEKVSVMGTGMGIPSISIYVNELIQSYDVKNLIRVGTMGGIQADVKVRDVVIAQAASTDSQINRNTFAGVDFAPVADFSLLKKAYDAGIEKGLSLKVGNVFSADRFYNDQLDKQQLADYGVLGIEMEAAALYTLAQKYGRRALAILTVSDHIFTGEETSAEERQTTFNDMIVVALEAAIK.

Histidine 4 lines the a purine D-ribonucleoside pocket. Phosphate-binding positions include glycine 20, arginine 24, arginine 43, and arginine 87–threonine 90. Residues glutamate 178–glutamate 180 and serine 202–aspartate 203 contribute to the a purine D-ribonucleoside site. Aspartate 203 serves as the catalytic Proton donor.

The protein belongs to the PNP/UDP phosphorylase family. As to quaternary structure, homohexamer; trimer of homodimers.

The catalysed reaction is a purine D-ribonucleoside + phosphate = a purine nucleobase + alpha-D-ribose 1-phosphate. It carries out the reaction a purine 2'-deoxy-D-ribonucleoside + phosphate = a purine nucleobase + 2-deoxy-alpha-D-ribose 1-phosphate. Catalyzes the reversible phosphorolytic breakdown of the N-glycosidic bond in the beta-(deoxy)ribonucleoside molecules, with the formation of the corresponding free purine bases and pentose-1-phosphate. This chain is Purine nucleoside phosphorylase DeoD-type, found in Listeria monocytogenes serotype 4b (strain CLIP80459).